A 78-amino-acid polypeptide reads, in one-letter code: MLVLSRKANESIKIDSNIEISILEIKKDSVKIAIKAPENIKILRSEIYDIIKEENKKSILQDKNNIHKIKNLFDYFNK.

The protein belongs to the CsrA/RsmA family. Homodimer; the beta-strands of each monomer intercalate to form a hydrophobic core, while the alpha-helices form wings that extend away from the core.

The protein resides in the cytoplasm. A translational regulator that binds mRNA to regulate translation initiation and/or mRNA stability. Usually binds in the 5'-UTR at or near the Shine-Dalgarno sequence preventing ribosome-binding, thus repressing translation. Its main target seems to be the major flagellin gene, while its function is anatagonized by FliW. The protein is Translational regulator CsrA of Borrelia hermsii (strain HS1 / DAH).